The primary structure comprises 452 residues: Ribosomal protein uS12 methylthiotransferase RimO (452 aa).

One can recognise an MTTase N-terminal domain in the interval 3-122; the sequence is LTVGLISLGC…LPEIITQVMD (120 aa). Residues Cys12, Cys48, Cys85, Cys162, Cys166, and Cys169 each contribute to the [4Fe-4S] cluster site. In terms of domain architecture, Radical SAM core spans 148 to 392; the sequence is LTPPHTAYIK…TLLLARLASE (245 aa). The TRAM domain maps to 395–452; it reads QEQIGRQIRVLVDAPGVARTEWDAPDIDGTVSVPLTLPVGQFATVTVTDAVAYELTAE.

Belongs to the methylthiotransferase family. RimO subfamily. [4Fe-4S] cluster serves as cofactor.

It localises to the cytoplasm. The catalysed reaction is L-aspartate(89)-[ribosomal protein uS12]-hydrogen + (sulfur carrier)-SH + AH2 + 2 S-adenosyl-L-methionine = 3-methylsulfanyl-L-aspartate(89)-[ribosomal protein uS12]-hydrogen + (sulfur carrier)-H + 5'-deoxyadenosine + L-methionine + A + S-adenosyl-L-homocysteine + 2 H(+). Functionally, catalyzes the methylthiolation of an aspartic acid residue of ribosomal protein uS12. The chain is Ribosomal protein uS12 methylthiotransferase RimO from Akkermansia muciniphila (strain ATCC BAA-835 / DSM 22959 / JCM 33894 / BCRC 81048 / CCUG 64013 / CIP 107961 / Muc).